The sequence spans 1055 residues: Inactive exonuclease DIS3L2 (1055 aa).

Disordered stretches follow at residues 1-109 (MKSA…SSPE) and 229-249 (SAAKPEGTNSPPEKDDKKARQ). Over residues 17–32 (HKKKRNRPQKQNRRSK) the composition is skewed to basic residues. The span at 39 to 59 (EDAHVEESLDGRDSSRSKAKD) shows a compositional bias: basic and acidic residues. Residues 97 to 108 (PRRSASPLLSSP) show a composition bias toward low complexity. One can recognise a CSD2 domain in the interval 367-446 (YVQLMPADPR…PQINAILYQN (80 aa)). Residues 476 to 824 (RKDLRDLCVL…VHRALAAALE (349 aa)) form the RNB domain. Mg(2+) contacts are provided by Asp488 and Asp497.

It belongs to the RNR ribonuclease family. DIS3L2 subfamily.

It localises to the cytoplasm. Probable inactive 3'-5'-exoribonuclease. Is unable to complement the growth defect of a yeast mutant lacking RRP44 exonuclease. This Arabidopsis thaliana (Mouse-ear cress) protein is Inactive exonuclease DIS3L2.